A 308-amino-acid polypeptide reads, in one-letter code: Glutaminase (308 aa).

The substrate site is built by Ser-66, Asn-117, Glu-161, Asn-168, Tyr-192, Tyr-244, and Val-262.

It belongs to the glutaminase family. Homotetramer.

The enzyme catalyses L-glutamine + H2O = L-glutamate + NH4(+). This Salmonella dublin (strain CT_02021853) protein is Glutaminase.